The following is a 394-amino-acid chain: Nicotinate phosphoribosyltransferase (394 aa).

A Phosphohistidine; by autocatalysis modification is found at H218.

It belongs to the NAPRTase family. Post-translationally, transiently phosphorylated on a His residue during the reaction cycle. Phosphorylation strongly increases the affinity for substrates and increases the rate of nicotinate D-ribonucleotide production. Dephosphorylation regenerates the low-affinity form of the enzyme, leading to product release.

The enzyme catalyses nicotinate + 5-phospho-alpha-D-ribose 1-diphosphate + ATP + H2O = nicotinate beta-D-ribonucleotide + ADP + phosphate + diphosphate. The protein operates within cofactor biosynthesis; NAD(+) biosynthesis; nicotinate D-ribonucleotide from nicotinate: step 1/1. Its function is as follows. Catalyzes the synthesis of beta-nicotinate D-ribonucleotide from nicotinate and 5-phospho-D-ribose 1-phosphate at the expense of ATP. This is Nicotinate phosphoribosyltransferase from Xylella fastidiosa (strain Temecula1 / ATCC 700964).